We begin with the raw amino-acid sequence, 386 residues long: Ferrochelatase (386 aa).

Fe cation is bound by residues His-196 and Glu-277.

Belongs to the ferrochelatase family.

The protein localises to the cytoplasm. The enzyme catalyses heme b + 2 H(+) = protoporphyrin IX + Fe(2+). It functions in the pathway porphyrin-containing compound metabolism; protoheme biosynthesis; protoheme from protoporphyrin-IX: step 1/1. Its function is as follows. Catalyzes the ferrous insertion into protoporphyrin IX. This is Ferrochelatase from Picosynechococcus sp. (strain ATCC 27264 / PCC 7002 / PR-6) (Agmenellum quadruplicatum).